The chain runs to 100 residues: Colipase-like protein 2 (100 aa).

Positions 1 to 21 (MAAALALVAGVLSGAVLPLWS) are cleaved as a signal peptide. Cystine bridges form between Cys34–Cys45, Cys40–Cys56, Cys44–Cys78, Cys66–Cys86, and Cys80–Cys97.

Belongs to the colipase family.

Its subcellular location is the secreted. In Homo sapiens (Human), this protein is Colipase-like protein 2 (CLPSL2).